A 480-amino-acid chain; its full sequence is Protein nucleotidyltransferase YdiU (480 aa).

ATP contacts are provided by Gly-84, Gly-86, Arg-87, Lys-107, Asp-119, Gly-120, Arg-170, and Arg-177. Asp-246 serves as the catalytic Proton acceptor. Mg(2+) contacts are provided by Asn-247 and Asp-256. Residue Asp-256 coordinates ATP.

This sequence belongs to the SELO family. Mg(2+) is required as a cofactor. Mn(2+) serves as cofactor.

The enzyme catalyses L-seryl-[protein] + ATP = 3-O-(5'-adenylyl)-L-seryl-[protein] + diphosphate. It catalyses the reaction L-threonyl-[protein] + ATP = 3-O-(5'-adenylyl)-L-threonyl-[protein] + diphosphate. The catalysed reaction is L-tyrosyl-[protein] + ATP = O-(5'-adenylyl)-L-tyrosyl-[protein] + diphosphate. It carries out the reaction L-histidyl-[protein] + UTP = N(tele)-(5'-uridylyl)-L-histidyl-[protein] + diphosphate. The enzyme catalyses L-seryl-[protein] + UTP = O-(5'-uridylyl)-L-seryl-[protein] + diphosphate. It catalyses the reaction L-tyrosyl-[protein] + UTP = O-(5'-uridylyl)-L-tyrosyl-[protein] + diphosphate. Nucleotidyltransferase involved in the post-translational modification of proteins. It can catalyze the addition of adenosine monophosphate (AMP) or uridine monophosphate (UMP) to a protein, resulting in modifications known as AMPylation and UMPylation. The polypeptide is Protein nucleotidyltransferase YdiU (Pseudoalteromonas atlantica (strain T6c / ATCC BAA-1087)).